The chain runs to 243 residues: Orotidine 5'-phosphate decarboxylase (243 aa).

Substrate is bound by residues D18, K39, 66–75, T130, R192, Q201, G221, and R222; that span reads DLKFHDIPTT. K68 acts as the Proton donor in catalysis.

The protein belongs to the OMP decarboxylase family. Type 1 subfamily. In terms of assembly, homodimer.

The enzyme catalyses orotidine 5'-phosphate + H(+) = UMP + CO2. It functions in the pathway pyrimidine metabolism; UMP biosynthesis via de novo pathway; UMP from orotate: step 2/2. In terms of biological role, catalyzes the decarboxylation of orotidine 5'-monophosphate (OMP) to uridine 5'-monophosphate (UMP). The protein is Orotidine 5'-phosphate decarboxylase of Synechococcus sp. (strain CC9311).